A 236-amino-acid polypeptide reads, in one-letter code: Phosphoribosylaminoimidazole-succinocarboxamide synthase (236 aa).

The protein belongs to the SAICAR synthetase family.

It catalyses the reaction 5-amino-1-(5-phospho-D-ribosyl)imidazole-4-carboxylate + L-aspartate + ATP = (2S)-2-[5-amino-1-(5-phospho-beta-D-ribosyl)imidazole-4-carboxamido]succinate + ADP + phosphate + 2 H(+). The protein operates within purine metabolism; IMP biosynthesis via de novo pathway; 5-amino-1-(5-phospho-D-ribosyl)imidazole-4-carboxamide from 5-amino-1-(5-phospho-D-ribosyl)imidazole-4-carboxylate: step 1/2. The sequence is that of Phosphoribosylaminoimidazole-succinocarboxamide synthase from Lysinibacillus sphaericus (strain C3-41).